Here is a 463-residue protein sequence, read N- to C-terminus: RuvB-like 2 (463 aa).

Ala2 bears the N-acetylalanine mark. Residue Lys9 forms a Glycyl lysine isopeptide (Lys-Gly) (interchain with G-Cter in SUMO2) linkage. Residue 77-84 (GQPGTGKT) coordinates ATP. Ser437 carries the post-translational modification Phosphoserine. Glycyl lysine isopeptide (Lys-Gly) (interchain with G-Cter in SUMO2) cross-links involve residues Lys444 and Lys456.

It belongs to the RuvB family. As to quaternary structure, forms homohexameric rings. Can form a dodecamer with RUVBL1 made of two stacked hexameric rings; however, even though RUVBL1 and RUVBL2 are present in equimolar ratio, the oligomeric status of each hexamer is not known. Oligomerization may regulate binding to nucleic acids and conversely, binding to nucleic acids may affect the dodecameric assembly. Interaction of the complex with DHX34 results in conformational changes of the N-terminus of the RUVBL2 subunits, resulting in loss of nucleotide binding ability and ATP hydrolysis of the complex. Interacts with the transcriptional activation domain of MYC. Interacts with ATF2. Component of the RNA polymerase II holoenzyme complex. May also act to bridge the LEF1/TCF1-CTNNB1 complex and TBP. Component of the NuA4 histone acetyltransferase complex which contains the catalytic subunit KAT5/TIP60 and the subunits EP400, TRRAP/PAF400, BRD8/SMAP, EPC1, DMAP1/DNMAP1, RUVBL1/TIP49, RUVBL2, ING3, actin, ACTL6A/BAF53A, MORF4L1/MRG15, MORF4L2/MRGX, MRGBP, YEATS4/GAS41, VPS72/YL1 and MEAF6. The NuA4 complex interacts with MYC and the adenovirus E1A protein. RUVBL2 interacts with EP400. Component of a NuA4-related complex which contains EP400, TRRAP/PAF400, SRCAP, BRD8/SMAP, EPC1, DMAP1/DNMAP1, RUVBL1/TIP49, RUVBL2, actin, ACTL6A/BAF53A, VPS72 and YEATS4/GAS41. Interacts with NPAT. Component of the chromatin-remodeling INO80 complex; specifically part of a complex module associated with the helicase ATP-binding and the helicase C-terminal domain of INO80. Component of some MLL1/MLL complex, at least composed of the core components KMT2A/MLL1, ASH2L, HCFC1/HCF1, WDR5 and RBBP5, as well as the facultative components BACC1, CHD8, E2F6, HSP70, INO80C, KANSL1, LAS1L, MAX, MCRS1, MGA, MYST1/MOF, PELP1, PHF20, PRP31, RING2, RUVB1/TIP49A, RUVB2/TIP49B, SENP3, TAF1, TAF4, TAF6, TAF7, TAF9 and TEX10. Interacts with IGHMBP2. Interacts with TELO2. Interacts with HINT1. Component of a SWR1-like complex. Component of the R2TP complex composed at least of RUVBL1, RUVBL2, RPAP3 and PIHD1. Component of the PAQosome complex which is responsible for the biogenesis of several protein complexes and which consists of R2TP complex members RUVBL1, RUVBL2, RPAP3 and PIH1D1, URI complex members PFDN2, PFDN6, PDRG1, UXT and URI1 as well as ASDURF, POLR2E and DNAAF10/WDR92. Interacts with ITFG1. Interacts with ZMYND10. Interacts with WAC; WAC positively regulates MTOR activity by promoting the assembly of the TTT complex composed of TELO2, TTI1 and TTI2 and the RUVBL complex composed of RUVBL1 and RUVBL2 into the TTT-RUVBL complex which leads to the dimerization of the mTORC1 complex and its subsequent activation. Forms a complex with APPL1 and APPL2. Interacts with ZNHIT2 (via HIT-type zinc finger) in the presence of ATP or ADP; shows a stronger interaction in the presence of ADP. The RUVBL1/RUVBL2 complex interacts with ZNHIT1 (via HIT-type zinc finger), ZNHIT3 (via HIT-type zinc finger), ZNHIT6 (via HIT-type zinc finger) and DDX59/ZNHIT5 (via HIT-type zinc finger) in the presence of ADP. Interacts with NOPCHAP1; the interaction is direct and disrupted upon ATP binding. Interacts with SMG1.

It is found in the nucleus matrix. The protein localises to the nucleus. Its subcellular location is the nucleoplasm. The protein resides in the cytoplasm. It localises to the membrane. It is found in the dynein axonemal particle. It carries out the reaction ATP + H2O = ADP + phosphate + H(+). Functionally, possesses single-stranded DNA-stimulated ATPase and ATP-dependent DNA helicase (5' to 3') activity; hexamerization is thought to be critical for ATP hydrolysis and adjacent subunits in the ring-like structure contribute to the ATPase activity. Component of the NuA4 histone acetyltransferase complex which is involved in transcriptional activation of select genes principally by acetylation of nucleosomal histones H4 and H2A. This modification may both alter nucleosome-DNA interactions and promote interaction of the modified histones with other proteins which positively regulate transcription. This complex may be required for the activation of transcriptional programs associated with oncogene and proto-oncogene mediated growth induction, tumor suppressor mediated growth arrest and replicative senescence, apoptosis, and DNA repair. The NuA4 complex ATPase and helicase activities seem to be, at least in part, contributed by the association of RUVBL1 and RUVBL2 with EP400. NuA4 may also play a direct role in DNA repair when recruited to sites of DNA damage. Component of a SWR1-like complex that specifically mediates the removal of histone H2A.Z/H2AZ1 from the nucleosome. Proposed core component of the chromatin remodeling INO80 complex which exhibits DNA- and nucleosome-activated ATPase activity and catalyzes ATP-dependent nucleosome sliding. Plays an essential role in oncogenic transformation by MYC and also modulates transcriptional activation by the LEF1/TCF1-CTNNB1 complex. May also inhibit the transcriptional activity of ATF2. Involved in the endoplasmic reticulum (ER)-associated degradation (ERAD) pathway where it negatively regulates expression of ER stress response genes. May play a role in regulating the composition of the U5 snRNP complex. The polypeptide is RuvB-like 2 (RUVBL2) (Bos taurus (Bovine)).